A 217-amino-acid polypeptide reads, in one-letter code: LexA repressor (217 aa).

A DNA-binding region (H-T-H motif) is located at residues 28–48; sequence RAEIAAEFGFSSPNAAEEHLR. Active-site for autocatalytic cleavage activity residues include serine 136 and lysine 173.

Belongs to the peptidase S24 family. In terms of assembly, homodimer.

It catalyses the reaction Hydrolysis of Ala-|-Gly bond in repressor LexA.. Its function is as follows. Represses a number of genes involved in the response to DNA damage (SOS response), including recA and lexA. In the presence of single-stranded DNA, RecA interacts with LexA causing an autocatalytic cleavage which disrupts the DNA-binding part of LexA, leading to derepression of the SOS regulon and eventually DNA repair. This is LexA repressor from Cupriavidus necator (strain ATCC 17699 / DSM 428 / KCTC 22496 / NCIMB 10442 / H16 / Stanier 337) (Ralstonia eutropha).